We begin with the raw amino-acid sequence, 384 residues long: Mitogen-activated protein kinase homolog 1 (384 aa).

The region spanning 32 to 319 (YVPIKPIGRG…VMEALQHPYM (288 aa)) is the Protein kinase domain. Residues 38-46 (IGRGAYGIV) and Lys61 each bind ATP. The active-site Proton acceptor is the Asp158. At Thr191 the chain carries Phosphothreonine. The TXY signature appears at 191–193 (TEY). Phosphotyrosine is present on Tyr193.

It belongs to the protein kinase superfamily. CMGC Ser/Thr protein kinase family. MAP kinase subfamily. The cofactor is Mg(2+). In terms of processing, dually phosphorylated on Thr-191 and Tyr-193, which activates the enzyme. In terms of tissue distribution, expressed in vegetative organs such as leaf, root, or stem. In the reproductive organs, it is found in the ovary, but not in the stamen.

It carries out the reaction L-seryl-[protein] + ATP = O-phospho-L-seryl-[protein] + ADP + H(+). It catalyses the reaction L-threonyl-[protein] + ATP = O-phospho-L-threonyl-[protein] + ADP + H(+). With respect to regulation, activated by tyrosine and threonine phosphorylation. The polypeptide is Mitogen-activated protein kinase homolog 1 (MPK1) (Petunia hybrida (Petunia)).